The following is a 202-amino-acid chain: Outer-membrane lipoprotein carrier protein (202 aa).

An N-terminal signal peptide occupies residues 1-18; sequence MNKLFLILLLIFSHEVFS.

The protein belongs to the LolA family. Monomer.

The protein localises to the periplasm. Its function is as follows. Participates in the translocation of lipoproteins from the inner membrane to the outer membrane. Only forms a complex with a lipoprotein if the residue after the N-terminal Cys is not an aspartate (The Asp acts as a targeting signal to indicate that the lipoprotein should stay in the inner membrane). The polypeptide is Outer-membrane lipoprotein carrier protein (Legionella pneumophila (strain Corby)).